A 382-amino-acid polypeptide reads, in one-letter code: Homoserine O-acetyltransferase (382 aa).

Residues 50–360 (NAVLICHALT…DKGHDAFLLD (311 aa)) enclose the AB hydrolase-1 domain. The active-site Nucleophile is serine 155. Arginine 225 is a binding site for substrate. Residues aspartate 321 and histidine 354 contribute to the active site. Substrate is bound at residue aspartate 355.

The protein belongs to the AB hydrolase superfamily. MetX family. In terms of assembly, homodimer.

It localises to the cytoplasm. The enzyme catalyses L-homoserine + acetyl-CoA = O-acetyl-L-homoserine + CoA. It functions in the pathway amino-acid biosynthesis; L-methionine biosynthesis via de novo pathway; O-acetyl-L-homoserine from L-homoserine: step 1/1. Transfers an acetyl group from acetyl-CoA to L-homoserine, forming acetyl-L-homoserine. The sequence is that of Homoserine O-acetyltransferase from Caulobacter vibrioides (strain ATCC 19089 / CIP 103742 / CB 15) (Caulobacter crescentus).